Reading from the N-terminus, the 201-residue chain is NADH-quinone oxidoreductase subunit C (201 aa).

It belongs to the complex I 30 kDa subunit family. As to quaternary structure, NDH-1 is composed of 14 different subunits. Subunits NuoB, C, D, E, F, and G constitute the peripheral sector of the complex.

Its subcellular location is the cell inner membrane. It catalyses the reaction a quinone + NADH + 5 H(+)(in) = a quinol + NAD(+) + 4 H(+)(out). In terms of biological role, NDH-1 shuttles electrons from NADH, via FMN and iron-sulfur (Fe-S) centers, to quinones in the respiratory chain. The immediate electron acceptor for the enzyme in this species is believed to be ubiquinone. Couples the redox reaction to proton translocation (for every two electrons transferred, four hydrogen ions are translocated across the cytoplasmic membrane), and thus conserves the redox energy in a proton gradient. The sequence is that of NADH-quinone oxidoreductase subunit C from Sinorhizobium medicae (strain WSM419) (Ensifer medicae).